A 201-amino-acid chain; its full sequence is uncharacterized protein (201 aa).

Functionally, may have a role in tissue tropism within the insect larvae. This is an uncharacterized protein from Lepidoptera (butterflies and moths).